A 575-amino-acid chain; its full sequence is Phosphoenolpyruvate-protein phosphotransferase (575 aa).

His-189 acts as the Tele-phosphohistidine intermediate in catalysis. 2 residues coordinate phosphoenolpyruvate: Arg-296 and Arg-332. Mg(2+) contacts are provided by Glu-431 and Asp-455. Residues 454–455 (ND) and Arg-465 contribute to the phosphoenolpyruvate site. Cys-502 serves as the catalytic Proton donor.

The protein belongs to the PEP-utilizing enzyme family. In terms of assembly, homodimer. Requires Mg(2+) as cofactor.

It localises to the cytoplasm. It carries out the reaction L-histidyl-[protein] + phosphoenolpyruvate = N(pros)-phospho-L-histidyl-[protein] + pyruvate. In terms of biological role, general (non sugar-specific) component of the phosphoenolpyruvate-dependent sugar phosphotransferase system (sugar PTS). This major carbohydrate active-transport system catalyzes the phosphorylation of incoming sugar substrates concomitantly with their translocation across the cell membrane. Enzyme I transfers the phosphoryl group from phosphoenolpyruvate (PEP) to the phosphoryl carrier protein (HPr). In Salmonella typhimurium (strain LT2 / SGSC1412 / ATCC 700720), this protein is Phosphoenolpyruvate-protein phosphotransferase (ptsI).